The chain runs to 81 residues: Small ribosomal subunit protein bS16 (81 aa).

It belongs to the bacterial ribosomal protein bS16 family.

The protein is Small ribosomal subunit protein bS16 of Desulfotalea psychrophila (strain LSv54 / DSM 12343).